A 158-amino-acid chain; its full sequence is SsrA-binding protein (158 aa).

The interval 131–158 (YDKRQTLRERQDKREADRAMSSHRRLGE) is disordered.

Belongs to the SmpB family.

The protein resides in the cytoplasm. Functionally, required for rescue of stalled ribosomes mediated by trans-translation. Binds to transfer-messenger RNA (tmRNA), required for stable association of tmRNA with ribosomes. tmRNA and SmpB together mimic tRNA shape, replacing the anticodon stem-loop with SmpB. tmRNA is encoded by the ssrA gene; the 2 termini fold to resemble tRNA(Ala) and it encodes a 'tag peptide', a short internal open reading frame. During trans-translation Ala-aminoacylated tmRNA acts like a tRNA, entering the A-site of stalled ribosomes, displacing the stalled mRNA. The ribosome then switches to translate the ORF on the tmRNA; the nascent peptide is terminated with the 'tag peptide' encoded by the tmRNA and targeted for degradation. The ribosome is freed to recommence translation, which seems to be the essential function of trans-translation. This chain is SsrA-binding protein, found in Clavibacter michiganensis subsp. michiganensis (strain NCPPB 382).